A 592-amino-acid polypeptide reads, in one-letter code: MIRTHEAGTLRPADAGSRVVLAGWVARRRDLGGVVFLDLRDASGIVQVVAREGVAGQVASRVRAEFCLRVAGEVRLRPAGNENPELETGDVEVVADEIEVLSEAAPLPFPVTGPVEVNEETRLKYRYLDLRRPGPARALRLRSEMNRLAREVMARHRFVEVETPYLTRSTPEGARDFLVPARLQPGHWYALPQSPQLFKQLLMVAGLERYYQLARCFRDEDFRADRQPEFTQLDIEMSFVTEDDVMALAEDVIATLWSQLAGVELALPLPRLTYAEAMRRFGSDKPDLRFGQEIVDLTKFFAGTSLRIFQAPYVGAVVMPGGAGQSRSELDEWTTFARSRGAKGLAYVLVGAELTGPIAKNLSDAERAGLPAATGARPGDAIFFAAGEQRASQELLGAVRLEIARRCRLTDPASGAPAWSLCWIVDPPLFEPDGAGGWTSVHHPFTAPKPEWMDRFADKPGEALAAAYDIVANGNEIGGGSIRIHRADVQQRVFEVLGISEAEANAKFGFLLEAFRYGPPPHGGIAFGWDRIAALLAGVESIRDVIAFPKTASGTDPLTGAPTPITPEQRKEAGIDADPYAAAGRPPGRQSA.

E172 lines the L-aspartate pocket. Positions 196-199 (QLFK) are aspartate. An L-aspartate-binding site is contributed by R218. ATP is bound by residues 218-220 (RDE) and Q227. H442 is an L-aspartate binding site. Residue E476 coordinates ATP. An L-aspartate-binding site is contributed by R483. Residue 528 to 531 (GWDR) participates in ATP binding. The segment at 553 to 592 (SGTDPLTGAPTPITPEQRKEAGIDADPYAAAGRPPGRQSA) is disordered.

It belongs to the class-II aminoacyl-tRNA synthetase family. Type 1 subfamily. In terms of assembly, homodimer.

The protein resides in the cytoplasm. It carries out the reaction tRNA(Asx) + L-aspartate + ATP = L-aspartyl-tRNA(Asx) + AMP + diphosphate. Its function is as follows. Aspartyl-tRNA synthetase with relaxed tRNA specificity since it is able to aspartylate not only its cognate tRNA(Asp) but also tRNA(Asn). Reaction proceeds in two steps: L-aspartate is first activated by ATP to form Asp-AMP and then transferred to the acceptor end of tRNA(Asp/Asn). This chain is Aspartate--tRNA(Asp/Asn) ligase, found in Acidothermus cellulolyticus (strain ATCC 43068 / DSM 8971 / 11B).